The primary structure comprises 309 residues: Tagatose-6-phosphate kinase (309 aa).

The protein belongs to the carbohydrate kinase PfkB family. LacC subfamily.

It catalyses the reaction D-tagatofuranose 6-phosphate + ATP = D-tagatofuranose 1,6-bisphosphate + ADP + H(+). The protein operates within carbohydrate metabolism; D-tagatose 6-phosphate degradation; D-glyceraldehyde 3-phosphate and glycerone phosphate from D-tagatose 6-phosphate: step 1/2. This is Tagatose-6-phosphate kinase from Streptococcus pyogenes serotype M6 (strain ATCC BAA-946 / MGAS10394).